The primary structure comprises 271 residues: MEDSHKSTTSETAPQPGSAVQGAHISHIAQQVSSLSESEESQDSSDSIGSSQKAHGILARRPSYRKILKDLSSEDTRGRKGDGENSGVSAAVTSMSVPTPIYQTSSGQYIAIAPNGALQLASPGTDGVQGLQTLTMTNSGSTQQGTTILQYAQTSDGQQILVPSNQVVVQTASGDMQTYQIRTTPSATSLPQTVVMTSPVTLTSQTTKTDDPQLKREIRLMKNREAARECRRKKKEYVKCLENRVAVLENQNKTLIEELKTLKDLYSNKSV.

Residues 1-61 (MEDSHKSTTS…QKAHGILARR (61 aa)) form a disordered region. Residues 31–90 (QVSSLSESEESQDSSDSIGSSQKAHGILARRPSYRKILKDLSSEDTRGRKGDGENSGVSA) enclose the KID domain. At S63 the chain carries Phosphoserine; by CaMK1, CDK3, RPS6KA4 and RPS6KA5. Residue S198 is modified to Phosphoserine; by HIPK2. Glycyl lysine isopeptide (Lys-Gly) (interchain with G-Cter in SUMO2) cross-links involve residues K208 and K215. Residues 213-271 (QLKREIRLMKNREAARECRRKKKEYVKCLENRVAVLENQNKTLIEELKTLKDLYSNKSV) enclose the bZIP domain. The basic motif stretch occupies residues 215-239 (KREIRLMKNREAARECRRKKKEYVK). The tract at residues 241–262 (LENRVAVLENQNKTLIEELKTL) is leucine-zipper.

It belongs to the bZIP family. ATF subfamily. As to quaternary structure, binds DNA as a dimer. Interacts with HIPK2 and CDK3. Interacts with MOTS-c, a peptide produced by the mitochondrially encoded 12S rRNA MT-RNR1; the interaction occurs in the nucleus following metabolic stress. Phosphorylated at Ser-198 by HIPK2 in response to genotoxic stress. This phosphorylation promotes transcription repression of FTH1 and other antioxidant detoxification genes. The CDK3-mediated phosphorylation at Ser-63 promotes its transactivation and transcriptional activities. Phosphorylated at Ser-63 by RPS6KA4 and RPS6KA5 in response to mitogenic or stress stimuli.

Its subcellular location is the nucleus. Functionally, this protein binds the cAMP response element (CRE) (consensus: 5'-GTGACGT[AC][AG]-3'), a sequence present in many viral and cellular promoters. Binds to the Tax-responsive element (TRE) of HTLV-I. Mediates PKA-induced stimulation of CRE-reporter genes. Represses the expression of FTH1 and other antioxidant detoxification genes. Triggers cell proliferation and transformation. In Homo sapiens (Human), this protein is Cyclic AMP-dependent transcription factor ATF-1 (ATF1).